Here is a 2210-residue protein sequence, read N- to C-terminus: Genome polyprotein (2210 aa).

Positions 1-22 (MAPVVSRDRHRHKIPKPHQPAP) are disordered. Residues 426-585 (SSKIMELSTI…ADFLRQHPGV (160 aa)) form the SF3 helicase domain. 456–463 (GPPGHGKS) is a binding site for ATP. Tyr-940 carries the post-translational modification O-(5'-phospho-RNA)-tyrosine. The Peptidase C24 domain maps to 991–1136 (GNNCEDLPLH…KVFTPITDAP (146 aa)). Catalysis depends on for 3CLpro activity residues His-1025, Asp-1039, and Cys-1103. Positions 1379–1501 (DHCLELDYSK…TIPSHLTKSI (123 aa)) constitute a RdRp catalytic domain. The interval 1654-1686 (SDLIREGNMSDNKSTPEQQHESSRAMDAGATGA) is disordered.

Specific enzymatic cleavages by its own cysteine protease yield mature proteins. The protease cleaves itself from the nascent polyprotein autocatalytically. Precursor p41 can be cleaved by viral 3CLpro into protein p19 and VPg, or cleaved by host protease into protein p23/2 and protein p18. Post-translationally, VPg is uridylylated by the polymerase and is covalently attached to the 5'-end of the polyadenylated genomic and subgenomic RNAs. This uridylylated form acts as a nucleotide-peptide primer for the polymerase.

The protein resides in the virion. It is found in the host cytoplasm. It catalyses the reaction a ribonucleoside 5'-triphosphate + H2O = a ribonucleoside 5'-diphosphate + phosphate + H(+). The catalysed reaction is Endopeptidase with a preference for cleavage when the P1 position is occupied by Glu-|-Xaa and the P1' position is occupied by Gly-|-Yaa.. It carries out the reaction RNA(n) + a ribonucleoside 5'-triphosphate = RNA(n+1) + diphosphate. Its function is as follows. Displays NTPase activity, but no helicase activity. Induces the formation of convoluted membranes derived from the host ER. These remodeled membranes probably form the viral factories that contain the replication complex. Together with NS2 and NS4, initiates the formation of the replication complex. Functionally, viral genome-linked protein is covalently linked to the 5'-end of the positive-strand, negative-strand genomic RNAs and subgenomic RNA. Acts as a genome-linked replication primer. May recruit ribosome to viral RNA thereby promoting viral proteins translation. Interacts with host translation initiation complex to allow the translation of viral proteins. Processes the polyprotein. 3CLpro-RdRp is first released by autocleavage, then all other proteins are cleaved. May cleave polyadenylate-binding protein thereby inhibiting cellular translation. In terms of biological role, replicates genomic and antigenomic RNA by recognizing replications specific signals. Also transcribes a subgenomic mRNA by initiating RNA synthesis internally on antigenomic RNA. This sgRNA codes for structural proteins. Catalyzes the covalent attachment VPg with viral RNAs. Its function is as follows. Capsid protein self assembles to form an icosahedral capsid with a T=3 symmetry, about 35 nm in diameter, and consisting of 180 capsid proteins. A smaller form of capsid with a diameter of 23 nm might be capsid proteins assembled as icosahedron with T=1 symmetry. The capsid encapsulate VP2 proteins and genomic or subgenomic RNA. Attaches virion to target cells by binding histo-blood group antigens, inducing endocytosis of the viral particle. Acidification of the endosome induces conformational change of capsid protein thereby injecting virus genomic RNA into host cytoplasm. In Bos taurus (Bovine), this protein is Genome polyprotein.